Consider the following 206-residue polypeptide: Probable nicotinate-nucleotide adenylyltransferase (206 aa).

The protein belongs to the NadD family.

The catalysed reaction is nicotinate beta-D-ribonucleotide + ATP + H(+) = deamido-NAD(+) + diphosphate. Its pathway is cofactor biosynthesis; NAD(+) biosynthesis; deamido-NAD(+) from nicotinate D-ribonucleotide: step 1/1. In terms of biological role, catalyzes the reversible adenylation of nicotinate mononucleotide (NaMN) to nicotinic acid adenine dinucleotide (NaAD). This chain is Probable nicotinate-nucleotide adenylyltransferase, found in Paenarthrobacter aurescens (strain TC1).